We begin with the raw amino-acid sequence, 3122 residues long: Laminin subunit alpha-2 (3122 aa).

An N-terminal signal peptide occupies residues 1–22 (MPGAAGVLLLLLLSGGLGGVQA). Residues 35 to 286 (QQRGLFPAVL…SVKDISVGGM (252 aa)) form the Laminin N-terminal domain. Residues N55 and N89 are each glycosylated (N-linked (GlcNAc...) asparagine). Cystine bridges form between C287–C296, C289–C307, C309–C318, C321–C341, C344–C353, and C346–C378. Laminin EGF-like domains lie at 287-343 (CICY…ECEA), 344-413 (CNCH…PCQP), 414-468 (CHCD…DCKA), and 469-517 (CNCS…GCDE). An N-linked (GlcNAc...) asparagine glycan is attached at N303. N363 and N380 each carry an N-linked (GlcNAc...) asparagine glycan. Disulfide bonds link C381-C390, C393-C411, C414-C426, C416-C442, C444-C453, C456-C466, C469-C482, C471-C486, C488-C497, and C500-C515. N-linked (GlcNAc...) asparagine glycosylation occurs at N470. Residues 518–527 (CFCSGVSNRC) enclose the Laminin EGF-like 5; first part domain. In terms of domain architecture, Laminin IV type A 1 spans 531–723 (YWTYGKIQDM…DGSIAAAVEV (193 aa)). Positions 724 to 756 (CQCPPGYTGSSCESCWPRHRRVNGTIFGGICEP) constitute a Laminin EGF-like 5; second part domain. A glycan (N-linked (GlcNAc...) asparagine) is linked at N746. 32 disulfide bridges follow: C757–C766, C759–C773, C776–C785, C788–C804, C807–C822, C809–C832, C835–C844, C847–C862, C865–C879, C867–C886, C889–C898, C901–C915, C918–C930, C920–C937, C939–C948, C951–C964, C967–C979, C969–C985, C987–C996, C999–C1011, C1014–C1023, C1016–C1030, C1032–C1041, C1044–C1057, C1060–C1072, C1062–C1079, C1081–C1090, C1093–C1103, C1106–C1118, C1108–C1134, C1136–C1145, and C1148–C1163. 8 Laminin EGF-like domains span residues 757 to 806 (CQCF…DCQP), 807 to 864 (CACP…SCQP), 865 to 917 (CQCN…NCQP), 918 to 966 (CRCN…GCVP), 967 to 1013 (CNCN…GCTA), 1014 to 1059 (CECS…GCKA), 1060 to 1105 (CNCS…RCNL), and 1106 to 1165 (CDCF…GCSS). N1061 carries an N-linked (GlcNAc...) asparagine glycan. In terms of domain architecture, Laminin EGF-like 14; first part spans 1166–1175 (CYCFGTTTQC). One can recognise a Laminin IV type A 2 domain in the interval 1176–1379 (SEAKGLIRTW…MTPPADLIEK (204 aa)). In terms of domain architecture, Laminin EGF-like 14; second part spans 1380–1419 (CDCPLGYSGLSCEACLPGFYRLRSQPGGRTPGPTLGTCVP). 12 disulfide bridges follow: C1420-C1429, C1422-C1436, C1439-C1448, C1451-C1466, C1469-C1484, C1471-C1494, C1497-C1506, C1509-C1524, C1527-C1539, C1529-C1546, C1548-C1557, and C1560-C1571. Laminin EGF-like domains follow at residues 1420-1468 (CQCN…DCQQ), 1469-1526 (CACP…SCQE), and 1527-1573 (CECD…ECVF). Residues 1574–2144 (CGDECTGLLL…NQARKQANSI (571 aa)) are domain II and I. Residues N1597, N1614, N1700, N1810, N1901, N1916, N1920, N2017, N2028, N2045, N2126, and N2240 are each glycosylated (N-linked (GlcNAc...) asparagine). The stretch at 1630–2150 (ERLIQLAEGN…ANSIKVSVSS (521 aa)) forms a coiled coil. 5 Laminin G-like domains span residues 2145 to 2328 (KVSV…CKGC), 2340 to 2521 (TIQF…TKGC), 2526 to 2710 (VYTV…IGRC), 2763 to 2934 (SKQF…VGTC), and 2939 to 3110 (QRGT…KALE). C2302 and C2328 are oxidised to a cystine. 3 N-linked (GlcNAc...) asparagine glycosylation sites follow: N2360, N2435, and N2478. Residues C2495 and C2521 are joined by a disulfide bond. N-linked (GlcNAc...) asparagine glycosylation is found at N2551, N2558, and N2648. A disulfide bond links C2683 and C2710. 2 N-linked (GlcNAc...) asparagine glycosylation sites follow: N2868 and N2893. The cysteines at positions 2909 and 2934 are disulfide-linked. The span at 3043 to 3060 (GNQVEAQSPNPASTSADT) shows a compositional bias: polar residues. Residues 3043–3063 (GNQVEAQSPNPASTSADTNDP) form a disordered region.

In terms of assembly, laminin is a complex glycoprotein, consisting of three different polypeptide chains (alpha, beta, gamma), which are bound to each other by disulfide bonds into a cross-shaped molecule comprising one long and three short arms with globules at each end. Alpha-2 is a subunit of laminin-2 (laminin-211 or merosin), laminin-4 (laminin-221 or S-merosin) and laminin-12 (laminin-213). Interacts with FBLN1, FBLN2 and NID2. In terms of tissue distribution, placenta, striated muscle, peripheral nerve, cardiac muscle, pancreas, lung, spleen, kidney, adrenal gland, skin, testis, meninges, choroid plexus, and some other regions of the brain; not in liver, thymus and bone.

The protein resides in the secreted. The protein localises to the extracellular space. It is found in the extracellular matrix. It localises to the basement membrane. Its function is as follows. Binding to cells via a high affinity receptor, laminin is thought to mediate the attachment, migration and organization of cells into tissues during embryonic development by interacting with other extracellular matrix components. In Homo sapiens (Human), this protein is Laminin subunit alpha-2 (LAMA2).